Consider the following 232-residue polypeptide: Ubiquinone biosynthesis O-methyltransferase (232 aa).

S-adenosyl-L-methionine-binding residues include Arg-36, Gly-55, Asp-76, and Leu-120.

It belongs to the methyltransferase superfamily. UbiG/COQ3 family.

It carries out the reaction a 3-demethylubiquinol + S-adenosyl-L-methionine = a ubiquinol + S-adenosyl-L-homocysteine + H(+). The enzyme catalyses a 3-(all-trans-polyprenyl)benzene-1,2-diol + S-adenosyl-L-methionine = a 2-methoxy-6-(all-trans-polyprenyl)phenol + S-adenosyl-L-homocysteine + H(+). It functions in the pathway cofactor biosynthesis; ubiquinone biosynthesis. O-methyltransferase that catalyzes the 2 O-methylation steps in the ubiquinone biosynthetic pathway. The polypeptide is Ubiquinone biosynthesis O-methyltransferase (Dechloromonas aromatica (strain RCB)).